We begin with the raw amino-acid sequence, 419 residues long: Gamma-glutamyl phosphate reductase (419 aa).

The protein belongs to the gamma-glutamyl phosphate reductase family.

Its subcellular location is the cytoplasm. The catalysed reaction is L-glutamate 5-semialdehyde + phosphate + NADP(+) = L-glutamyl 5-phosphate + NADPH + H(+). Its pathway is amino-acid biosynthesis; L-proline biosynthesis; L-glutamate 5-semialdehyde from L-glutamate: step 2/2. In terms of biological role, catalyzes the NADPH-dependent reduction of L-glutamate 5-phosphate into L-glutamate 5-semialdehyde and phosphate. The product spontaneously undergoes cyclization to form 1-pyrroline-5-carboxylate. The sequence is that of Gamma-glutamyl phosphate reductase from Tolumonas auensis (strain DSM 9187 / NBRC 110442 / TA 4).